The primary structure comprises 141 residues: Nucleoside diphosphate kinase (141 aa).

ATP contacts are provided by lysine 11, phenylalanine 59, arginine 87, threonine 93, arginine 104, and asparagine 114. Residue histidine 117 is the Pros-phosphohistidine intermediate of the active site.

The protein belongs to the NDK family. Homotetramer. It depends on Mg(2+) as a cofactor.

The protein resides in the cytoplasm. The catalysed reaction is a 2'-deoxyribonucleoside 5'-diphosphate + ATP = a 2'-deoxyribonucleoside 5'-triphosphate + ADP. It catalyses the reaction a ribonucleoside 5'-diphosphate + ATP = a ribonucleoside 5'-triphosphate + ADP. In terms of biological role, major role in the synthesis of nucleoside triphosphates other than ATP. The ATP gamma phosphate is transferred to the NDP beta phosphate via a ping-pong mechanism, using a phosphorylated active-site intermediate. This chain is Nucleoside diphosphate kinase, found in Bdellovibrio bacteriovorus (strain ATCC 15356 / DSM 50701 / NCIMB 9529 / HD100).